Here is a 319-residue protein sequence, read N- to C-terminus: Mitochondrial thiamine pyrophosphate carrier 1 (319 aa).

Solcar repeat units lie at residues Gly-12 to Ser-110, Pro-121 to Pro-207, and Pro-214 to Ile-309. Helical transmembrane passes span Val-17 to Leu-35, Leu-91 to Val-107, Phe-127 to Leu-147, Gly-182 to Tyr-201, Thr-221 to Leu-237, and Gly-284 to Trp-301.

This sequence belongs to the mitochondrial carrier (TC 2.A.29) family.

The protein resides in the mitochondrion inner membrane. In terms of biological role, mitochondrial transporter that mediates uptake of thiamine pyrophosphate (ThPP) into mitochondria. The protein is Mitochondrial thiamine pyrophosphate carrier 1 (TPC1) of Coccidioides immitis (strain RS) (Valley fever fungus).